A 70-amino-acid chain; its full sequence is DNA-directed RNA polymerase subunit epsilon (70 aa).

This sequence belongs to the RNA polymerase subunit epsilon family. In terms of assembly, RNAP is composed of a core of 2 alpha, a beta and a beta' subunit. The core is associated with a delta subunit, and at least one of epsilon or omega. When a sigma factor is associated with the core the holoenzyme is formed, which can initiate transcription.

It carries out the reaction RNA(n) + a ribonucleoside 5'-triphosphate = RNA(n+1) + diphosphate. Functionally, a non-essential component of RNA polymerase (RNAP). The polypeptide is DNA-directed RNA polymerase subunit epsilon (Bacillus cereus (strain Q1)).